We begin with the raw amino-acid sequence, 123 residues long: YLNNFRYLYIRHDREACTCHANSCIMSAYFSNSHVQYENYINDCKPQCILNELHSWVECESGECCEQCRSECDIAESCTNGQPLHNFGYCYNGNCPIMYHQCYLYCYNSLGNQFPCVPYYTPR.

The region spanning 6–52 (RYLYIRHDREACTCHANSCIMSAYFSNSHVQYENYINDCKPQCILNE) is the Peptidase M12B domain. His12 is a Zn(2+) binding site. A disulfide bridge connects residues Cys19 and Cys24. Ca(2+)-binding residues include Cys48 and Asn51. Positions 53–80 (LHSWVECESGECCEQCRSECDIAESCTN) constitute a Disintegrin domain. 4 disulfide bridges follow: Cys59/Cys65, Cys64/Cys78, Cys72/Cys90, and Cys106/Cys116. Positions 71 to 73 (ECD) match the D/ECD-tripeptide motif.

The protein belongs to the venom metalloproteinase (M12B) family. P-III subfamily. P-IIIa sub-subfamily. In terms of assembly, monomer. The cofactor is Zn(2+). In terms of processing, the N-terminus is blocked. As to expression, expressed by the venom gland.

The protein localises to the secreted. With respect to regulation, its proteolytic and hemorrhagic activities are inhibited by EDTA, but not by PMSF. In terms of biological role, snake venom metalloproteinase that has high hemorrhagic activity and degrades the alpha-chain of fibrinogen (FGA), leaving the beta- and the gamma-chain intact. It may also inhibit platelet aggregation. Cleaves insulin B chain at '25-Phe-|-Val-26', '26-Val-|-Asn-27', '29-His-|-Leu-30', '30-Leu-|-Cys-31', '33-Ser-|-His-34', '35-Leu-|-Val-36', '40-Tyr-|-Leu-41', '41-Leu-|-Val-42', '42-Val-|-Cys-43', '43-Cys-|-Gly-44', '44-Gly-|-Glu-45', '46-Arg-|-Gly-47', '47-Gly-|-Phe-48', '49-Phe-|-Tyr-50' and '52-Pro-|-Lys-53' bonds. Also cleaves human prothrombin (72 kDa) and activation fragment F1 (27 kDa) of activated human prothrombin, to generate two new proteins of 68 and 23 kDa. The sequence is that of Zinc metalloproteinase-disintegrin-like jerdohagin from Protobothrops jerdonii (Jerdon's pitviper).